Reading from the N-terminus, the 300-residue chain is Cation-efflux pump FieF (300 aa).

The helical transmembrane segment at 24–44 (LLIKIFAWWYTGSVSILAALV) threads the bilayer. Asp45 and Asp49 together coordinate Zn(2+). Transmembrane regions (helical) follow at residues 82–102 (AALAQSMFISGSALFLFLTSI) and 114–134 (PGVGIGVTVIALICTIILVTF). Residues His153 and Asp157 each coordinate Zn(2+). 2 helical membrane-spanning segments follow: residues 156 to 176 (SDVMMNGAILIALGLSWYGWH) and 178 to 198 (ADALFALGIGIYILYSALRMG).

This sequence belongs to the cation diffusion facilitator (CDF) transporter (TC 2.A.4) family. FieF subfamily. Homodimer.

Its subcellular location is the cell inner membrane. It catalyses the reaction Zn(2+)(in) + H(+)(out) = Zn(2+)(out) + H(+)(in). The enzyme catalyses Cd(2+)(in) + H(+)(out) = Cd(2+)(out) + H(+)(in). The catalysed reaction is Fe(2+)(in) + H(+)(out) = Fe(2+)(out) + H(+)(in). Its function is as follows. Divalent metal cation transporter which exports Zn(2+), Cd(2+) and possibly Fe(2+). May be involved in zinc and iron detoxification by efflux. The sequence is that of Cation-efflux pump FieF from Salmonella enteritidis PT4 (strain P125109).